Consider the following 470-residue polypeptide: L-fuculokinase (470 aa).

This sequence belongs to the FGGY kinase family. Requires a divalent metal cation as cofactor.

It catalyses the reaction L-fuculose + ATP = L-fuculose 1-phosphate + ADP + H(+). It participates in carbohydrate degradation; L-fucose degradation; L-lactaldehyde and glycerone phosphate from L-fucose: step 2/3. Its function is as follows. Catalyzes the phosphorylation of L-fuculose. This Haemophilus influenzae (strain ATCC 51907 / DSM 11121 / KW20 / Rd) protein is L-fuculokinase.